A 420-amino-acid polypeptide reads, in one-letter code: Trophoblast glycoprotein (420 aa).

The N-terminal stretch at Met1 to Ser34 is a signal peptide. The Extracellular segment spans residues Thr35–Ser355. The 39-residue stretch at Ser53–Leu91 folds into the LRRNT domain. 2 disulfide bridges follow: Cys62–Cys68 and Cys66–Cys77. Asn81 is a glycosylation site (N-linked (GlcNAc...) asparagine). LRR repeat units lie at residues Tyr92–Arg113, Pro116–Glu139, Leu141–Ser163, Pro172–Val204, Leu209–Gln232, Leu233–Arg255, and Asn256–Asn275. Asn124 is a glycosylation site (N-linked (GlcNAc...) asparagine). An N-linked (GlcNAc...) asparagine glycan is attached at Asn275. The LRRCT domain occupies Gly283–Pro346. 2 disulfide bridges follow: Cys298/Cys323 and Cys300/Cys344. The helical transmembrane segment at Tyr356–Leu376 threads the bilayer. Residues Asn377 to Val420 are Cytoplasmic-facing. At Ser418 the chain carries Phosphoserine.

Highly glycosylated.

It is found in the cell membrane. May function as an inhibitor of Wnt/beta-catenin signaling by indirectly interacting with LRP6 and blocking Wnt3a-dependent LRP6 internalization. In Macaca fascicularis (Crab-eating macaque), this protein is Trophoblast glycoprotein (TPBG).